Reading from the N-terminus, the 214-residue chain is ATP phosphoribosyltransferase (214 aa).

It belongs to the ATP phosphoribosyltransferase family. Short subfamily. As to quaternary structure, heteromultimer composed of HisG and HisZ subunits.

It localises to the cytoplasm. It carries out the reaction 1-(5-phospho-beta-D-ribosyl)-ATP + diphosphate = 5-phospho-alpha-D-ribose 1-diphosphate + ATP. Its pathway is amino-acid biosynthesis; L-histidine biosynthesis; L-histidine from 5-phospho-alpha-D-ribose 1-diphosphate: step 1/9. Its function is as follows. Catalyzes the condensation of ATP and 5-phosphoribose 1-diphosphate to form N'-(5'-phosphoribosyl)-ATP (PR-ATP). Has a crucial role in the pathway because the rate of histidine biosynthesis seems to be controlled primarily by regulation of HisG enzymatic activity. The protein is ATP phosphoribosyltransferase of Lysinibacillus sphaericus (strain C3-41).